A 287-amino-acid polypeptide reads, in one-letter code: Putative sugar uptake protein EF_0928 (287 aa).

10 helical membrane-spanning segments follow: residues 5–27 (IALVPMIAWGSIGLVSGKIGGSA), 32–49 (LGMTIGALLFSIVVFFVI), 53–71 (LTTATLIVGFISGLFWSLG), 84–106 (VSVGLPISTGMQLVVNTVAGAVF), 116–134 (FVVGFIALAFLVFGVYLTA), 155–177 (IRALIFSTVGYGVYTIIINATGL), 182–200 (IILPQSIGMLVGASFFAFK), 207–229 (FVWMNMTTGLLWGLGNICMLLTM), 234–256 (LAISFSLSQMGIIISTLGGIFLL), and 265–284 (MFYVIFGCIFVILGGILLGY).

The protein belongs to the GRP transporter (TC 2.A.7.5) family.

The protein resides in the cell membrane. The chain is Putative sugar uptake protein EF_0928 from Enterococcus faecalis (strain ATCC 700802 / V583).